Reading from the N-terminus, the 576-residue chain is Arginine--tRNA ligase (576 aa).

Residues 132-142 carry the 'HIGH' region motif; sequence ANPTGPMHIGH.

Belongs to the class-I aminoacyl-tRNA synthetase family. In terms of assembly, monomer.

The protein resides in the cytoplasm. The catalysed reaction is tRNA(Arg) + L-arginine + ATP = L-arginyl-tRNA(Arg) + AMP + diphosphate. The polypeptide is Arginine--tRNA ligase (Ehrlichia chaffeensis (strain ATCC CRL-10679 / Arkansas)).